Consider the following 1031-residue polypeptide: Protein draper (1031 aa).

The signal sequence occupies residues Met1–Ala16. Residues Gln17 to Ser800 lie on the Extracellular side of the membrane. Positions Gly25–Pro100 constitute an EMI domain. Cystine bridges form between Cys29-Cys88, Cys55-Cys62, Cys87-Cys98, Cys102-Cys111, Cys106-Cys117, and Cys119-Cys128. Residue Asn73 is glycosylated (N-linked (GlcNAc...) asparagine). EGF-like domains follow at residues Val99–Asp129, Tyr137–Ala172, Phe180–Asp215, His223–Ala258, Tyr266–Phe301, and Tyr309–Ala344. N-linked (GlcNAc...) asparagine glycosylation is present at Asn140. 3 disulfide bridges follow: Cys141-Cys153, Cys147-Cys160, and Cys162-Cys171. Asn183 carries an N-linked (GlcNAc...) asparagine glycan. 9 disulfides stabilise this stretch: Cys184-Cys196, Cys190-Cys203, Cys205-Cys214, Cys227-Cys239, Cys233-Cys246, Cys248-Cys257, Cys270-Cys282, Cys276-Cys289, and Cys291-Cys300. Residue Asn312 is glycosylated (N-linked (GlcNAc...) asparagine). 3 disulfides stabilise this stretch: Cys313/Cys325, Cys319/Cys332, and Cys334/Cys343. N-linked (GlcNAc...) asparagine glycosylation is present at Asn329. Residue Asn358 is glycosylated (N-linked (GlcNAc...) asparagine). EGF-like domains follow at residues Tyr398 to Glu433 and Phe484 to Glu519. 6 disulfides stabilise this stretch: Cys402–Cys414, Cys408–Cys421, Cys423–Cys432, Cys488–Cys500, Cys494–Cys507, and Cys509–Cys518. N-linked (GlcNAc...) asparagine glycosylation occurs at Asn418. Asn504 is a glycosylation site (N-linked (GlcNAc...) asparagine). Residues Asn540, Asn584, and Asn585 are each glycosylated (N-linked (GlcNAc...) asparagine). One can recognise an EGF-like 9 domain in the interval Tyr572–Ala607. Cystine bridges form between Cys576–Cys588, Cys582–Cys595, and Cys597–Cys606. Asn630 carries N-linked (GlcNAc...) asparagine glycosylation. One can recognise an EGF-like 10 domain in the interval Tyr660–Asn695. 3 disulfides stabilise this stretch: Cys664-Cys676, Cys670-Cys683, and Cys685-Cys694. N-linked (GlcNAc...) asparagine glycosylation is found at Asn695 and Asn795. Residues Val801–Tyr821 form a helical membrane-spanning segment. At Tyr822 to Lys1031 the chain is on the cytoplasmic side. Residues Lys940–Tyr954 show a composition bias toward basic and acidic residues. 2 disordered regions span residues Lys940–His964 and Thr989–Lys1031. Over residues Asp1009–Lys1031 the composition is skewed to polar residues.

The protein belongs to the MEGF family. As to quaternary structure, interacts (via the cytoplasmic domain) with shark; this is required for the recruitment of drpr and glial cells to severed axons and for the phagocytosis of axonal debris by glial cells following axon injury. Interacts with ced-6. Interacts with csw; this results in dephosphorylation of drpr isoform A which is required for the inhibition of glial cell engulfment of axonal debris produced following axonal injury. In terms of processing, phosphorylated on tyrosine residues. Phosphorylation is induced by binding to prtp. It is also induced by binding to the membrane phospholipid phosphatidylserine. Phosphorylation may be mediated directly or indirectly by Src42a and is required for interaction with shark. Dephosphorylated by csw which is required for the inhibition of glial cell engulfment of axonal debris produced following axonal injury. As to expression, expressed in adult head (at protein level). Expressed in glia, macrophages and ectoderm (at protein level). Detected in glia around the mushroom body dorsal lobe and in glial processes infiltrating the medial lobe (at protein level). Expressed in adult brain glia including antennal lobe glia (at protein level). Expressed in the larval fat body (at protein level). Expressed in the ovary (at protein level). Isoform B: Predominant isoform in adult glia.

It is found in the cell membrane. The protein localises to the cell projection. The protein resides in the axon. Its subcellular location is the cytoplasm. It localises to the postsynaptic cell membrane. It is found in the cell cortex. The protein localises to the phagocytic cup. The protein resides in the cytoplasmic vesicle. Its subcellular location is the phagosome. Its function is as follows. Receptor which is involved in the phagocytosis of a variety of cells including apoptotic cells, severed and pruned axons, degenerating dendrites, salivary gland cells, germline cells and bacteria. Binds to the ligand prtp which relocates from the endoplasmic reticulum to the cell surface during apoptosis. Ligand-binding may promote tyrosine phosphorylation mediated by Src42a, interaction with shark and subsequent activation of phagocytosis. Also binds to the membrane phospholipid phosphatidylserine which is exposed on the surface of apoptotic cells. Required for the phagocytosis of apoptotic cells by macrophages. Also required for the phagocytosis of apoptotic neurons by glial cells in the embryonic nervous system. Acts downstream of NimC4/simu in the glial phagocytosis of apoptotic neurons. Plays a role in the glial engulfment of larval axons as part of programmed axon pruning during metamorphosis. Also mediates glial cell clearance of severed axons following axonal injury. Required for the engulfment of degenerating dendrites by epidermal cells. Required in the ovary for the engulfment and subsequent processing of dying germline cells by follicular epithelial cells through activation of the JNK/bsk pathway. Plays a role in neuromuscular junction development by mediating the clearance of presynaptic debris and immature boutons which are shed by growing synapses. Required for larval salivary gland cell death which occurs following a rise in steroid levels after puparium formation. Also involved in bacterial phagocytosis. Required for hemocyte phagocytosis of the Gram-positive bacterium S.aureus. Lipoteichoic acid, synthesized by the S.aureus lipoteichoic acid synthase ltaS, acts as a ligand for drpr in this process. Together with Src42a and shark, promotes the migration of macrophages to sites of wounding as part of a signaling cascade where Scr42a detects production of hydrogen peroxide at wound sites which triggers phosphorylation of drpr and subsequent recruitment and activation of shark. Also required for macrophage priming which occurs following phagocytosis of apoptotic cells and ensures that macrophages develop a form of molecular memory that allows them to later mount an inflammatory response to tissue damage and bacterial infection. Is also an essential factor in the regulation of muscle development and myogenesis, and as a consequence is required for normal locomotion. Likely to control the balance between skeletal muscle satellite cells proliferation and differentiation through regulation of the notch signaling pathway. Functionally, promotes engulfment of axonal debris by glial cells following axonal injury. Potently inhibits glial cell engulfment of axonal debris produced following axonal injury. In Drosophila melanogaster (Fruit fly), this protein is Protein draper.